A 305-amino-acid chain; its full sequence is Tetraacyldisaccharide 4'-kinase (305 aa).

ATP is bound at residue Ser39–Thr46.

This sequence belongs to the LpxK family.

The catalysed reaction is a lipid A disaccharide + ATP = a lipid IVA + ADP + H(+). It functions in the pathway glycolipid biosynthesis; lipid IV(A) biosynthesis; lipid IV(A) from (3R)-3-hydroxytetradecanoyl-[acyl-carrier-protein] and UDP-N-acetyl-alpha-D-glucosamine: step 6/6. Transfers the gamma-phosphate of ATP to the 4'-position of a tetraacyldisaccharide 1-phosphate intermediate (termed DS-1-P) to form tetraacyldisaccharide 1,4'-bis-phosphate (lipid IVA). The chain is Tetraacyldisaccharide 4'-kinase from Pseudoalteromonas atlantica (strain T6c / ATCC BAA-1087).